Reading from the N-terminus, the 197-residue chain is Xanthine phosphoribosyltransferase (197 aa).

Xanthine is bound by residues L20 and N27. Residue 128–132 (ANGQA) coordinates 5-phospho-alpha-D-ribose 1-diphosphate. Xanthine is bound at residue K156.

Belongs to the purine/pyrimidine phosphoribosyltransferase family. Xpt subfamily. In terms of assembly, homodimer.

The protein localises to the cytoplasm. The catalysed reaction is XMP + diphosphate = xanthine + 5-phospho-alpha-D-ribose 1-diphosphate. The protein operates within purine metabolism; XMP biosynthesis via salvage pathway; XMP from xanthine: step 1/1. Functionally, converts the preformed base xanthine, a product of nucleic acid breakdown, to xanthosine 5'-monophosphate (XMP), so it can be reused for RNA or DNA synthesis. The polypeptide is Xanthine phosphoribosyltransferase (Bacillus thuringiensis (strain Al Hakam)).